The primary structure comprises 346 residues: Leucine zipper protein 2 (346 aa).

A signal peptide spans Met-1–Ser-17. N-linked (GlcNAc...) asparagine glycosylation is found at Asn-19 and Asn-131. The stretch at Arg-41 to His-209 forms a coiled coil. Residues Leu-162–Leu-190 form a leucine-zipper region. Asn-241 and Asn-296 each carry an N-linked (GlcNAc...) asparagine glycan. A disordered region spans residues Ser-271–Asn-346. Over residues Cys-293–Ala-324 the composition is skewed to polar residues. Over residues Thr-326 to Asn-346 the composition is skewed to basic and acidic residues.

Its subcellular location is the secreted. This Danio rerio (Zebrafish) protein is Leucine zipper protein 2 (luzp2).